Consider the following 43-residue polypeptide: Potassium channel toxin gamma-KTx 4.13 (43 aa).

4 cysteine pairs are disulfide-bonded: C5/C23, C11/C34, C20/C39, and C24/C41.

It belongs to the ergtoxin family. Gamma-KTx 4 subfamily. Expressed by the venom gland.

It is found in the secreted. Reversibly blocks Kv11/ERG potassium channels. The polypeptide is Potassium channel toxin gamma-KTx 4.13 (Centruroides noxius (Mexican scorpion)).